A 723-amino-acid polypeptide reads, in one-letter code: MKKDTMLAGRVTIPTDVDVVPETMELLNRWGADAIRDCDGTDYPEELKAVQAKVYSTYYTTRKDNAWAKAHPEEVQQCYIMTSFYTATETTLRIPLLKGIAKELMMVNNYDDKVRWWEVIDRSTAMVVSTDTWSYDKETGEVIITNCEPFHNYTVSFLAYLIWDPVHMYNAVVNGWQGVEHQITFDVRQPKTREYSMVRLRKFIEEHPYVDVIRYTTFFHQFTLVFDEMMREKYVDWYGYSASVSPYILEQFEKEVGYRFRPEFIIDQGYYNNQYRIPSKEFKDFQAFQRREVAKLAKEMVDITHEYGKEAMMFLGDHWIGTEPFMEEFKTIGLDAVVGSVGNGSTLRLISDIPGVKYTEGRFLPYFFPDTFHEGGDPVKEAKVNWVTARRAILRKPIDRIGYGGYLKLACQFPEFIDYVESVCNEFRELYENIKGTTPFCIKRVAVLNSWGKMRAWGAHMVHHALYQKQNYSYAGVIESLSGTPFEVSFISFDDIKKDKNILKNIDVIINVGDGDTAHTGGLVWEDADISSAIHQFVYEGGGLIGIGEPTGHQYQGRYIQLANVFGIEKETGFTLNYDKYNWDAVESHFITEDCTKEVDFGEGKKNMYALEGTTILVQMEKEVQMAVNEFGKGRSVYLSGLPYSFENSRVLYRSILWSAHEEENLHKWYSSNFNVEVHAYVKNNKYCVVNNTYEPQNTTIYRGDSSSFDLELEANEIIWYEI.

D317 acts as the Proton donor in catalysis.

Belongs to the glycoside hydrolase 112 family.

It carries out the reaction beta-D-galactosyl-(1-&gt;3)-N-acetyl-D-glucosamine + phosphate = alpha-D-galactose 1-phosphate + N-acetyl-D-glucosamine. Functionally, reversibly phosphorolyzes beta-D-galactopyranosyl-(1-&gt;3)-N-acetyl-D-glucosamine to form alpha-D-galactopyranose 1-phosphate and acetyl-D-glucosamine. Active towards galacto-N-biose and lacto-N-biose. Does not phosphorolyze galacto-N-tetraose or lacto-N-tetraose. In the reverse reaction has activity toward N-acetyl-D-glucosamine and N-acetyl-D-galactosamine, but not L-rhamnose, D-glucose or D-galactose. The protein is 1,3-beta-galactosyl-N-acetylhexosamine phosphorylase Cphy0577 of Lachnoclostridium phytofermentans (strain ATCC 700394 / DSM 18823 / ISDg) (Clostridium phytofermentans).